The sequence spans 860 residues: Eukaryotic translation initiation factor 3 subunit C (860 aa).

Positions 1-76 (MSRFFYGNDS…SEESEEEDVV (76 aa)) are disordered. Over residues 10–51 (SDSDSSGSDEEELYSDEEVEQSEEESSEEDASSEEESSEDED) the composition is skewed to acidic residues. The PCI domain occupies 599–773 (FHMHINLELL…DAIVFRKGVE (175 aa)). Positions 812–860 (RDQGAGARGGRGPRGGGQARGGPRLPGGQQRRPGGQQFGGGALGGAIKA) are disordered. Positions 817 to 831 (GARGGRGPRGGGQAR) are enriched in gly residues. The segment covering 832-846 (GGPRLPGGQQRRPGG) has biased composition (low complexity). The span at 847-860 (QQFGGGALGGAIKA) shows a compositional bias: gly residues.

The protein belongs to the eIF-3 subunit C family. As to quaternary structure, component of the eukaryotic translation initiation factor 3 (eIF-3) complex.

It localises to the cytoplasm. Its function is as follows. Component of the eukaryotic translation initiation factor 3 (eIF-3) complex, which is involved in protein synthesis of a specialized repertoire of mRNAs and, together with other initiation factors, stimulates binding of mRNA and methionyl-tRNAi to the 40S ribosome. The eIF-3 complex specifically targets and initiates translation of a subset of mRNAs involved in cell proliferation. The polypeptide is Eukaryotic translation initiation factor 3 subunit C (nip1) (Emericella nidulans (strain FGSC A4 / ATCC 38163 / CBS 112.46 / NRRL 194 / M139) (Aspergillus nidulans)).